The sequence spans 327 residues: 4-diphosphocytidyl-2-C-methyl-D-erythritol kinase (327 aa).

Lysine 14 is a catalytic residue. 97–107 (PDGAGLGGGSA) serves as a coordination point for ATP. Aspartate 140 is a catalytic residue.

Belongs to the GHMP kinase family. IspE subfamily.

It catalyses the reaction 4-CDP-2-C-methyl-D-erythritol + ATP = 4-CDP-2-C-methyl-D-erythritol 2-phosphate + ADP + H(+). The protein operates within isoprenoid biosynthesis; isopentenyl diphosphate biosynthesis via DXP pathway; isopentenyl diphosphate from 1-deoxy-D-xylulose 5-phosphate: step 3/6. Catalyzes the phosphorylation of the position 2 hydroxy group of 4-diphosphocytidyl-2C-methyl-D-erythritol. This is 4-diphosphocytidyl-2-C-methyl-D-erythritol kinase from Oleidesulfovibrio alaskensis (strain ATCC BAA-1058 / DSM 17464 / G20) (Desulfovibrio alaskensis).